The sequence spans 260 residues: Type III pantothenate kinase (260 aa).

Asp-6 to Val-13 contributes to the ATP binding site. A substrate-binding site is contributed by Gly-107–Arg-110. Asp-109 functions as the Proton acceptor in the catalytic mechanism. Asp-129 contacts K(+). Thr-132 lines the ATP pocket. Position 184 (Thr-184) interacts with substrate.

This sequence belongs to the type III pantothenate kinase family. In terms of assembly, homodimer. Requires NH4(+) as cofactor. The cofactor is K(+).

Its subcellular location is the cytoplasm. It catalyses the reaction (R)-pantothenate + ATP = (R)-4'-phosphopantothenate + ADP + H(+). Its pathway is cofactor biosynthesis; coenzyme A biosynthesis; CoA from (R)-pantothenate: step 1/5. In terms of biological role, catalyzes the phosphorylation of pantothenate (Pan), the first step in CoA biosynthesis. In Ruegeria sp. (strain TM1040) (Silicibacter sp.), this protein is Type III pantothenate kinase.